Reading from the N-terminus, the 395-residue chain is S-adenosylmethionine synthase (395 aa).

His15 contributes to the ATP binding site. Asp17 contributes to the Mg(2+) binding site. Glu43 contributes to the K(+) binding site. The L-methionine site is built by Glu56 and Gln99. Residues 99 to 109 form a flexible loop region; sequence QSPDIAMGVDE. ATP-binding positions include 173–175, 239–240, Asp248, 254–255, Ala271, and Lys275; these read DGK, RF, and RK. Asp248 lines the L-methionine pocket. Lys279 is an L-methionine binding site.

The protein belongs to the AdoMet synthase family. Homotetramer; dimer of dimers. Mg(2+) is required as a cofactor. K(+) serves as cofactor.

Its subcellular location is the cytoplasm. The catalysed reaction is L-methionine + ATP + H2O = S-adenosyl-L-methionine + phosphate + diphosphate. Its pathway is amino-acid biosynthesis; S-adenosyl-L-methionine biosynthesis; S-adenosyl-L-methionine from L-methionine: step 1/1. Its function is as follows. Catalyzes the formation of S-adenosylmethionine (AdoMet) from methionine and ATP. The overall synthetic reaction is composed of two sequential steps, AdoMet formation and the subsequent tripolyphosphate hydrolysis which occurs prior to release of AdoMet from the enzyme. In Desulforudis audaxviator (strain MP104C), this protein is S-adenosylmethionine synthase.